The following is a 641-amino-acid chain: Tetracycline resistance protein TetS (641 aa).

The tr-type G domain occupies 1–242 (MKIINIGILA…VITSKLFSPT (242 aa)). Residues 10 to 17 (AHVDAGKT), 74 to 78 (DTPGH), and 128 to 131 (NKID) contribute to the GTP site.

It belongs to the TRAFAC class translation factor GTPase superfamily. Classic translation factor GTPase family. TetM/TetO subfamily.

In terms of biological role, abolishes the inhibitory effect of tetracyclin on protein synthesis by a non-covalent modification of the ribosomes. The protein is Tetracycline resistance protein TetS (tetS) of Listeria monocytogenes.